Here is a 105-residue protein sequence, read N- to C-terminus: Iron-sulfur cluster assembly protein CyaY (105 aa).

Belongs to the frataxin family.

In terms of biological role, involved in iron-sulfur (Fe-S) cluster assembly. May act as a regulator of Fe-S biogenesis. The sequence is that of Iron-sulfur cluster assembly protein CyaY from Chromobacterium violaceum (strain ATCC 12472 / DSM 30191 / JCM 1249 / CCUG 213 / NBRC 12614 / NCIMB 9131 / NCTC 9757 / MK).